The primary structure comprises 157 residues: Probable succinate transporter subunit YjjB (157 aa).

The next 5 membrane-spanning stretches (helical) occupy residues 8 to 28 (LALM…AMVF), 34 to 54 (ALPW…LMMS), 55 to 75 (AGFN…SIGI), 87 to 107 (VFTV…TAMI), and 129 to 149 (FLKA…PGLW).

Belongs to the ThrE exporter (TC 2.A.79) family. As to quaternary structure, the transporter is composed of YjjB and YjjP.

Its subcellular location is the cell inner membrane. Functionally, involved in succinate export with YjjP. Both proteins are required for export. This chain is Probable succinate transporter subunit YjjB, found in Salmonella typhi.